Here is a 537-residue protein sequence, read N- to C-terminus: Lysine--tRNA ligase (537 aa).

The 'HIGH' region motif lies at 30-38; that stretch reads PSGNIHIGN. Residues 276 to 280 carry the 'KMSKS' region motif; the sequence is AMSSS.

It belongs to the class-I aminoacyl-tRNA synthetase family.

It localises to the cytoplasm. It carries out the reaction tRNA(Lys) + L-lysine + ATP = L-lysyl-tRNA(Lys) + AMP + diphosphate. The sequence is that of Lysine--tRNA ligase from Methanosarcina barkeri (strain Fusaro / DSM 804).